The primary structure comprises 242 residues: Aquaporin (242 aa).

Over 1–11 (MNTSTKLICQK) the chain is Cytoplasmic. A helical transmembrane segment spans residues 12-32 (LFAEMLCSCIFGFAVYSAILN). Over 33 to 39 (TKASNSS) the chain is Extracellular. Residues 40 to 60 (ISSTTVGLTVCFSSISLIYTF) form a helical membrane-spanning segment. Residues 61–83 (CDHSVAHFNPAITIAAICTGKLD) are Cytoplasmic-facing. The NPA motif lies at 69-71 (NPA). Residues 84–104 (ILLGIGYVIAQLIGFILATLL) traverse the membrane as a helical segment. The Extracellular portion of the chain corresponds to 105–133 (TVVCFPYGYLKTMEFIASARISDDISTVN). A helical membrane pass occupies residues 134-154 (LFFTEFILSFILVFIAFEVGI). The Cytoplasmic segment spans residues 155 to 175 (NAIREPGVTLFVGIKQIDRSK). The helical transmembrane segment at 176 to 196 (FAPLTIGITLGFLAFLASTTS) threads the bilayer. Over 197 to 217 (GGAFNPGIVWGPAIMGGNFDD) the chain is Extracellular. The NPG signature appears at 201-203 (NPG). The chain crosses the membrane as a helical span at residues 218 to 238 (FVIYIISELSGGLLGAFIQVF). Residues 239-242 (LLFK) lie on the Cytoplasmic side of the membrane.

The protein belongs to the MIP/aquaporin (TC 1.A.8) family.

Its subcellular location is the cell membrane. Functionally, water channel required to facilitate the transport of water across membranes. Involved in osmotolerance. This chain is Aquaporin (AQP), found in Enterocytozoon bieneusi (strain H348) (Microsporidian parasite).